Consider the following 477-residue polypeptide: Aspartyl/glutamyl-tRNA(Asn/Gln) amidotransferase subunit B (477 aa).

This sequence belongs to the GatB/GatE family. GatB subfamily. Heterotrimer of A, B and C subunits.

The enzyme catalyses L-glutamyl-tRNA(Gln) + L-glutamine + ATP + H2O = L-glutaminyl-tRNA(Gln) + L-glutamate + ADP + phosphate + H(+). It catalyses the reaction L-aspartyl-tRNA(Asn) + L-glutamine + ATP + H2O = L-asparaginyl-tRNA(Asn) + L-glutamate + ADP + phosphate + 2 H(+). Functionally, allows the formation of correctly charged Asn-tRNA(Asn) or Gln-tRNA(Gln) through the transamidation of misacylated Asp-tRNA(Asn) or Glu-tRNA(Gln) in organisms which lack either or both of asparaginyl-tRNA or glutaminyl-tRNA synthetases. The reaction takes place in the presence of glutamine and ATP through an activated phospho-Asp-tRNA(Asn) or phospho-Glu-tRNA(Gln). This chain is Aspartyl/glutamyl-tRNA(Asn/Gln) amidotransferase subunit B, found in Ligilactobacillus salivarius (strain UCC118) (Lactobacillus salivarius).